Here is a 332-residue protein sequence, read N- to C-terminus: T-cell surface glycoprotein CD1c3 (332 aa).

The N-terminal stretch at 1 to 17 (MLFLQFLFLDVVLGGSI) is a signal peptide. Over 18–300 (TKNVVQENIS…IILYWGHGLS (283 aa)) the chain is Extracellular. 4 N-linked (GlcNAc...) asparagine glycosylation sites follow: asparagine 25, asparagine 38, asparagine 75, and asparagine 146. Intrachain disulfides connect cysteine 120/cysteine 184 and cysteine 224/cysteine 279. Residues 205 to 292 (PEVWLSSSPN…HSSLRDQDII (88 aa)) enclose the Ig-like domain. Residues 301 to 321 (VILITFAVIVPLVLLIILVLL) traverse the membrane as a helical segment. Residues 322 to 332 (CKKCCTYQGIP) lie on the Cytoplasmic side of the membrane.

In terms of assembly, heterodimer with B2M (beta-2-microglobulin).

The protein resides in the cell membrane. The protein localises to the endosome membrane. Antigen-presenting protein that binds self and non-self lipid and glycolipid antigens and presents them to T-cell receptors on natural killer T-cells. This is T-cell surface glycoprotein CD1c3 (CD1C3) from Cavia porcellus (Guinea pig).